Consider the following 120-residue polypeptide: Proteinase inhibitor (120 aa).

Residues 1-19 (MKQLIIATLLSALSGGCMA) form the signal peptide. A disulfide bridge connects residues Cys43 and Cys65.

It belongs to the protease inhibitor I38 family. In terms of assembly, monomer.

It localises to the periplasm. Its function is as follows. Inhibitor of the extracellular proteases A, B, and C of E.chrysanthemi and the S.marcescens 50 kDa extracellular protease. It forms a non-covalent bond with the proteases and may prevent autocatalytic cleavage of the proteases zymogen in the periplasm. This is Proteinase inhibitor (inh) from Dickeya chrysanthemi (Pectobacterium chrysanthemi).